A 117-amino-acid polypeptide reads, in one-letter code: Gamma-aminobutyric acid receptor-associated protein-like 2 (117 aa).

Lys24 carries the N6-acetyllysine modification. A phosphoserine mark is found at Ser39, Ser87, and Ser88. Gly116 is lipidated: Phosphatidylethanolamine amidated glycine; alternate. Gly116 is lipidated: Phosphatidylserine amidated glycine; alternate. Residue Phe117 is a propeptide, removed in mature form.

Belongs to the ATG8 family. As to quaternary structure, monomer. Interacts with ATG3, ATG7, ATG13 and ULK1. Interacts with TP53INP1 and TP53INP2. Interacts with TBC1D25. Directly interacts with SQSTM1 and BNIP3. Interacts with TECPR2 and PCM1. Interacts with TBC1D5. Interacts with TRIM5. Interacts with MEFV and TRIM21. Interacts with WDFY3. Interacts with UBA5; promoting recruitment of UBA5 to the endoplasmic reticulum membrane. Interacts with GOSR1. Interacts with KBTBD6 and KBTBD7; the interaction is direct. Interacts with reticulophagy regulators RETREG1, RETREG2 and RETREG3. Interacts with IRGM. Interacts with DNM2. Interacts with NCOA4. Interacts with IRGQ. In terms of processing, the precursor molecule is cleaved by ATG4 (ATG4A, ATG4B, ATG4C or ATG4D) to expose the glycine at the C-terminus and form the cytosolic form, GABARAPL2-I. The processed form is then activated by APG7L/ATG7, transferred to ATG3 and conjugated to phosphatidylethanolamine (PE) phospholipid to form the membrane-bound form, GABARAPL2-II. During non-canonical autophagy, the processed form is conjugated to phosphatidylserine (PS) phospholipid. ATG4 proteins also mediate the delipidation of PE-conjugated forms required for GABARAPL2 recycling when autophagosomes fuse with lysosomes. In addition, ATG4B and ATG4D mediate delipidation of ATG8 proteins conjugated to PS during non-canonical autophagy. ATG4B constitutes the major protein for proteolytic activation. ATG4D is the main enzyme for delipidation activity. Phosphorylation at Ser-87 and Ser-88 by TBK1 prevents interaction with ATG4 (ATG4A, ATG4B, ATG4C or ATG4D). Phosphorylation by TBK1 on autophagosomes prevents their delipidation by ATG4 and premature removal from nascent autophagosomes. As to expression, ubiquitous. Expressed at high levels in the brain, heart, prostate, ovary, spleen and skeletal muscle. Expressed at very low levels in lung, thymus and small intestine.

It localises to the cytoplasmic vesicle. The protein resides in the autophagosome. Its subcellular location is the endoplasmic reticulum membrane. The protein localises to the golgi apparatus. Functionally, ubiquitin-like modifier involved in intra-Golgi traffic. Modulates intra-Golgi transport through coupling between NSF activity and SNAREs activation. It first stimulates the ATPase activity of NSF which in turn stimulates the association with GOSR1. Involved in autophagy. Plays a role in mitophagy which contributes to regulate mitochondrial quantity and quality by eliminating the mitochondria to a basal level to fulfill cellular energy requirements and preventing excess ROS production. Whereas LC3s are involved in elongation of the phagophore membrane, the GABARAP/GATE-16 subfamily is essential for a later stage in autophagosome maturation. The protein is Gamma-aminobutyric acid receptor-associated protein-like 2 of Bos taurus (Bovine).